Consider the following 932-residue polypeptide: RNA-binding protein 12 (932 aa).

Residues 97-116 form a disordered region; sequence IPPANASRSGPPPSSGMSGR. Positions 98–116 are enriched in low complexity; sequence PPANASRSGPPPSSGMSGR. The 76-residue stretch at 304 to 379 folds into the RRM 1 domain; that stretch reads LYVSVHGMPF…RYVEVSPATE (76 aa). A phosphoserine mark is found at Ser-352 and Ser-375. The tract at residues 393 to 424 is disordered; it reads QNMGPSGQSHPPPQTLPRSKSPSGQKRSRSRS. Polar residues predominate over residues 408-417; it reads LPRSKSPSGQ. Ser-420, Ser-422, and Ser-424 each carry phosphoserine. The RRM 2 domain occupies 430-507; the sequence is FCVYLKGLPF…RFIQVHPITK (78 aa). Ser-525 carries the post-translational modification Phosphoserine. Residues 717-734 are compositionally biased toward low complexity; the sequence is NGPPFNFPGNFGGSNAFG. Residues 717 to 853 are disordered; sequence NGPPFNFPGN…PGFASSSGKP (137 aa). The segment covering 783–811 has biased composition (gly residues); that stretch reads SGFGGGPQNFGNGPGSLGGPPGFGSGPPG. A compositionally biased stretch (pro residues) spans 824 to 836; sequence AFGPGPGPGPGPG. The RRM 3 domain maps to 856-932; that stretch reads TVIKVQNMPF…GSRKVKLVLG (77 aa).

It is found in the nucleus. This is RNA-binding protein 12 (RBM12) from Macaca mulatta (Rhesus macaque).